Reading from the N-terminus, the 148-residue chain is Large ribosomal subunit protein uL15 (148 aa).

Over residues 1–30 (MTHSKRNTRKLRGHVSHGHGRVGKHRKHPG) the composition is skewed to basic residues. Positions 1-38 (MTHSKRNTRKLRGHVSHGHGRVGKHRKHPGGRGMAGPE) are disordered.

It belongs to the universal ribosomal protein uL15 family.

The chain is Large ribosomal subunit protein uL15 (RPL27A) from Euplotes crassus.